Consider the following 940-residue polypeptide: Isoleucine--tRNA ligase (940 aa).

The 'HIGH' region motif lies at 58-68 (PYANGSIHIGH). Glutamate 564 is a binding site for L-isoleucyl-5'-AMP. The 'KMSKS' region motif lies at 605–609 (KMSKS). Lysine 608 serves as a coordination point for ATP. Zn(2+) contacts are provided by cysteine 903, cysteine 906, cysteine 923, and cysteine 926.

It belongs to the class-I aminoacyl-tRNA synthetase family. IleS type 1 subfamily. As to quaternary structure, monomer. It depends on Zn(2+) as a cofactor.

It localises to the cytoplasm. The catalysed reaction is tRNA(Ile) + L-isoleucine + ATP = L-isoleucyl-tRNA(Ile) + AMP + diphosphate. Its function is as follows. Catalyzes the attachment of isoleucine to tRNA(Ile). As IleRS can inadvertently accommodate and process structurally similar amino acids such as valine, to avoid such errors it has two additional distinct tRNA(Ile)-dependent editing activities. One activity is designated as 'pretransfer' editing and involves the hydrolysis of activated Val-AMP. The other activity is designated 'posttransfer' editing and involves deacylation of mischarged Val-tRNA(Ile). The chain is Isoleucine--tRNA ligase from Shewanella baltica (strain OS155 / ATCC BAA-1091).